The chain runs to 147 residues: Lysozyme C, intestinal isozyme (147 aa).

An N-terminal signal peptide occupies residues 1 to 18 (MKAVLILGLLLLSVTVQG). Positions 19–147 (KKFEKCELAR…VSSYIRGCKL (129 aa)) constitute a C-type lysozyme domain. Intrachain disulfides connect cysteine 24/cysteine 145, cysteine 48/cysteine 133, cysteine 83/cysteine 99, and cysteine 95/cysteine 113. Active-site residues include glutamate 53 and aspartate 71.

It belongs to the glycosyl hydrolase 22 family.

The enzyme catalyses Hydrolysis of (1-&gt;4)-beta-linkages between N-acetylmuramic acid and N-acetyl-D-glucosamine residues in a peptidoglycan and between N-acetyl-D-glucosamine residues in chitodextrins.. Functionally, lysozymes have primarily a bacteriolytic function; those in tissues and body fluids are associated with the monocyte-macrophage system and enhance the activity of immunoagents. This is Lysozyme C, intestinal isozyme from Bos taurus (Bovine).